Here is a 539-residue protein sequence, read N- to C-terminus: Membrane protein insertase YidC (539 aa).

A helical membrane pass occupies residues 6–26 (NILLIALALVSFLLFQQWNVA). Polar residues predominate over residues 35 to 44 (EQAQSGSTLP). A disordered region spans residues 35–55 (EQAQSGSTLPAPSYADDLDPA). 4 helical membrane-spanning segments follow: residues 341-361 (SFIQ…TFIV), 416-436 (LGGC…YWAL), 454-474 (LSAQ…MFLI), and 495-515 (PVMF…YWLV).

Belongs to the OXA1/ALB3/YidC family. Type 1 subfamily. Interacts with the Sec translocase complex via SecD. Specifically interacts with transmembrane segments of nascent integral membrane proteins during membrane integration.

It is found in the cell inner membrane. Required for the insertion and/or proper folding and/or complex formation of integral membrane proteins into the membrane. Involved in integration of membrane proteins that insert both dependently and independently of the Sec translocase complex, as well as at least some lipoproteins. Aids folding of multispanning membrane proteins. This chain is Membrane protein insertase YidC, found in Vibrio atlanticus (strain LGP32) (Vibrio splendidus (strain Mel32)).